The following is a 272-amino-acid chain: Shikimate dehydrogenase (NADP(+)) (272 aa).

Shikimate-binding positions include Ser14 to Ser16 and Thr61. The active-site Proton acceptor is the Lys65. Positions 86 and 102 each coordinate shikimate. NADP(+) is bound by residues Gly126–Ala130, Asn149–Lys154, Ser189, and Met213. Tyr215 is a shikimate binding site. Gly238 provides a ligand contact to NADP(+).

This sequence belongs to the shikimate dehydrogenase family. In terms of assembly, homodimer.

It carries out the reaction shikimate + NADP(+) = 3-dehydroshikimate + NADPH + H(+). It functions in the pathway metabolic intermediate biosynthesis; chorismate biosynthesis; chorismate from D-erythrose 4-phosphate and phosphoenolpyruvate: step 4/7. Its function is as follows. Involved in the biosynthesis of the chorismate, which leads to the biosynthesis of aromatic amino acids. Catalyzes the reversible NADPH linked reduction of 3-dehydroshikimate (DHSA) to yield shikimate (SA). This Haemophilus influenzae (strain ATCC 51907 / DSM 11121 / KW20 / Rd) protein is Shikimate dehydrogenase (NADP(+)).